The following is a 775-amino-acid chain: Polyribonucleotide nucleotidyltransferase (775 aa).

The segment at Asp-223 to Asp-247 is disordered. Residues Arg-231 to Arg-243 show a composition bias toward basic residues. Residues Asp-567 and Asp-573 each coordinate Mg(2+). Residues Pro-633 to Ile-692 form the KH domain. An S1 motif domain is found at Gly-704–Val-773.

It belongs to the polyribonucleotide nucleotidyltransferase family. Mg(2+) serves as cofactor.

The protein resides in the cytoplasm. It carries out the reaction RNA(n+1) + phosphate = RNA(n) + a ribonucleoside 5'-diphosphate. Involved in mRNA degradation. Catalyzes the phosphorolysis of single-stranded polyribonucleotides processively in the 3'- to 5'-direction. This chain is Polyribonucleotide nucleotidyltransferase, found in Corynebacterium kroppenstedtii (strain DSM 44385 / JCM 11950 / CIP 105744 / CCUG 35717).